The sequence spans 309 residues: Putative F-box protein At4g05475 (309 aa).

Positions 1–26 are disordered; sequence MATSTTLQSLLMKEDEEQRNKRRTTS. The F-box domain occupies 37-84; sequence RINWVDLPPELTTSILLRLSVTDILDNARKLCRAWRRICKDPSMWRKI.

This Arabidopsis thaliana (Mouse-ear cress) protein is Putative F-box protein At4g05475.